The following is a 54-amino-acid chain: Large ribosomal subunit protein bL33 (54 aa).

Belongs to the bacterial ribosomal protein bL33 family.

The sequence is that of Large ribosomal subunit protein bL33 from Symbiobacterium thermophilum (strain DSM 24528 / JCM 14929 / IAM 14863 / T).